A 344-amino-acid chain; its full sequence is Ferredoxin--NADP reductase (344 aa).

The FAD site is built by Ser-12, Asp-31, Lys-39, Tyr-43, Val-83, Ile-118, Asp-285, and Ser-326.

The protein belongs to the ferredoxin--NADP reductase type 2 family. In terms of assembly, homodimer. FAD serves as cofactor.

It catalyses the reaction 2 reduced [2Fe-2S]-[ferredoxin] + NADP(+) + H(+) = 2 oxidized [2Fe-2S]-[ferredoxin] + NADPH. The polypeptide is Ferredoxin--NADP reductase (Staphylococcus aureus (strain JH1)).